Reading from the N-terminus, the 550-residue chain is Membrane protein of ER body 2 (550 aa).

The segment at 46–199 (EFRSKAAATA…SSDSEEKSNL (154 aa)) is disordered. Composition is skewed to low complexity over residues 80–105 (SVSE…SETG) and 112–121 (TGSNEENGNN). Positions 122–132 (WLESSSTNLPN) are enriched in polar residues. Positions 134–165 (ENKRQRNGEDCEIEEEEENNERSLSDSEEKSN) form a coiled coil. Residues 143–152 (DCEIEEEEEN) show a composition bias toward acidic residues. Basic and acidic residues-rich tracts occupy residues 153 to 166 (NERS…KSNL) and 185 to 198 (KNER…EKSN). Helical transmembrane passes span 374 to 394 (STMN…IVLA), 425 to 445 (ILVA…VYAF), 458 to 478 (ISVF…KVYV), and 500 to 520 (SIVV…GEYI). Positions 393–418 (LAQNFQDLRNSSDQEKDRYEELLGRR) form a coiled coil.

It belongs to the CCC1 family. As to quaternary structure, interacts directly or indirectly with NAI2.

Its subcellular location is the endoplasmic reticulum membrane. May sequester excess cytosolic iron and manganese into endoplasmic reticulum to reduce metal ion toxicity. Not essential for the accumulation of ER body components, including PYK10. This Arabidopsis thaliana (Mouse-ear cress) protein is Membrane protein of ER body 2 (MEB2).